The primary structure comprises 359 residues: Putative nucleotidyltransferase MAB21L1 (359 aa).

Residues 23-24 (RK) and 63-66 (YEGL) contribute to the a ribonucleoside 5'-triphosphate site. Positions 73 and 75 each coordinate Mg(2+). A ribonucleoside 5'-triphosphate is bound by residues Lys248 and 252–255 (SILK).

Belongs to the mab-21 family. In terms of assembly, monomer. Homodecamer; composed of 2 back to back homopentamers. The protein may exist as monomer in solution and oiligomerizes upon ligand binding.

The protein localises to the nucleus. Putative nucleotidyltransferase required for several aspects of embryonic development including normal development of the eye. It is unclear whether it displays nucleotidyltransferase activity in vivo. Binds single-stranded RNA (ssRNA). In Bos taurus (Bovine), this protein is Putative nucleotidyltransferase MAB21L1 (MAB21L1).